Reading from the N-terminus, the 394-residue chain is Elongation factor Tu (394 aa).

The tr-type G domain occupies 10–204 (KPHVNVGTIG…HLDSYIPEPE (195 aa)). Positions 19-26 (GHVDHGKT) are G1. 19–26 (GHVDHGKT) contacts GTP. Threonine 26 provides a ligand contact to Mg(2+). Residues 60-64 (GITIN) form a G2 region. The G3 stretch occupies residues 81 to 84 (DCPG). GTP is bound by residues 81–85 (DCPGH) and 136–139 (NKCD). The segment at 136 to 139 (NKCD) is G4. Residues 174–176 (SAL) form a G5 region.

Belongs to the TRAFAC class translation factor GTPase superfamily. Classic translation factor GTPase family. EF-Tu/EF-1A subfamily. As to quaternary structure, monomer.

It is found in the cytoplasm. It catalyses the reaction GTP + H2O = GDP + phosphate + H(+). GTP hydrolase that promotes the GTP-dependent binding of aminoacyl-tRNA to the A-site of ribosomes during protein biosynthesis. The protein is Elongation factor Tu of Cronobacter sakazakii (strain ATCC BAA-894) (Enterobacter sakazakii).